Reading from the N-terminus, the 363-residue chain is Sensor protein BasS (363 aa).

At 1–13 the chain is on the cytoplasmic side; that stretch reads MHFLRRPISLRQR. A helical transmembrane segment spans residues 14–34; it reads LILTIGAILLVFELISVFWLW. Over 35–64 the chain is Periplasmic; the sequence is HESTEQIQLFEQALRDNRNNDRHIMREIRE. The chain crosses the membrane as a helical span at residues 65 to 88; that stretch reads AVASLIVPGVFMVSLTLFICYQAV. Residues 89–141 form the HAMP domain; it reads RRITRPLAELQKELEARTADNLTPIAIHSATLEIEAVVSALNDLVSRLTSTLD. Topologically, residues 89-363 are cytoplasmic; the sequence is RRITRPLAEL…KKDQYVANQI (275 aa). The Histidine kinase domain maps to 149 to 357; the sequence is DVAHELRTPL…RAWVRLKKDQ (209 aa). Residue histidine 152 is modified to Phosphohistidine; by autocatalysis.

In terms of processing, autophosphorylated.

Its subcellular location is the cell inner membrane. The catalysed reaction is ATP + protein L-histidine = ADP + protein N-phospho-L-histidine.. Member of the two-component regulatory system BasS/BasR Autophosphorylates and activates BasR by phosphorylation. In Escherichia coli (strain K12), this protein is Sensor protein BasS (basS).